Here is a 319-residue protein sequence, read N- to C-terminus: Protease HtpX homolog (319 aa).

2 helical membrane passes run 6–26 and 28–48; these read TAML…VIGG and GGMM…YWNS. Residue His-130 coordinates Zn(2+). The active site involves Glu-131. His-134 contacts Zn(2+). 2 helical membrane passes run 145-165 and 172-192; these read LTAT…FFGG and PLGF…AMLV. Glu-201 provides a ligand contact to Zn(2+). The disordered stretch occupies residues 277 to 319; the sequence is MARETSTGSTAPVRPDNAGRKSRSVPRTGWGRGGSEPPKGPWS.

This sequence belongs to the peptidase M48B family. Zn(2+) serves as cofactor.

Its subcellular location is the cell inner membrane. The polypeptide is Protease HtpX homolog (Rhizobium meliloti (strain 1021) (Ensifer meliloti)).